The primary structure comprises 220 residues: Probable transcriptional regulator NRG2 (220 aa).

C2H2-type zinc fingers lie at residues 153–175 (HFCK…NRIH) and 181–205 (HICP…YRTH).

It localises to the nucleus. Functionally, transcriptional repressor. The polypeptide is Probable transcriptional regulator NRG2 (NRG2) (Saccharomyces cerevisiae (strain ATCC 204508 / S288c) (Baker's yeast)).